Reading from the N-terminus, the 248-residue chain is ATP synthase subunit a, chloroplastic (248 aa).

Helical transmembrane passes span 38–58 (QVLL…TIAV), 96–116 (VPFI…GALL), 135–155 (INTT…AGLT), 200–220 (LVVA…VMFL), and 221–241 (GLFT…AYIG).

It belongs to the ATPase A chain family. As to quaternary structure, F-type ATPases have 2 components, CF(1) - the catalytic core - and CF(0) - the membrane proton channel. CF(1) has five subunits: alpha(3), beta(3), gamma(1), delta(1), epsilon(1). CF(0) has four main subunits: a, b, b' and c.

Its subcellular location is the plastid. It localises to the chloroplast thylakoid membrane. Functionally, key component of the proton channel; it plays a direct role in the translocation of protons across the membrane. This Pinus thunbergii (Japanese black pine) protein is ATP synthase subunit a, chloroplastic.